The sequence spans 249 residues: Probable transcriptional regulatory protein DICTH_1505 (249 aa).

It belongs to the TACO1 family.

It is found in the cytoplasm. The chain is Probable transcriptional regulatory protein DICTH_1505 from Dictyoglomus thermophilum (strain ATCC 35947 / DSM 3960 / H-6-12).